A 703-amino-acid chain; its full sequence is Subtilisin-like protease SBT4.7 (703 aa).

A signal peptide spans 1–19 (MAKRDYFCFVVLFLSSVSA). A propeptide spans 20–107 (VIDDPQNKQV…VFPNINYKLQ (88 aa)) (activation peptide). Residues 29-106 (VYVVYMGSLP…SVFPNINYKL (78 aa)) enclose the Inhibitor I9 domain. The 446-residue stretch at 111-556 (SWDFLGLKEG…AGHVDQIAAI (446 aa)) folds into the Peptidase S8 domain. Asp139 acts as the Charge relay system in catalysis. Residue Asn170 is glycosylated (N-linked (GlcNAc...) asparagine). His194 (charge relay system) is an active-site residue. Residues Asn217, Asn360, Asn416, and Asn433 are each glycosylated (N-linked (GlcNAc...) asparagine). The 62-residue stretch at 350–411 (KYPLVYGDNF…LLPPDDFDSL (62 aa)) folds into the PA domain. Ser495 acts as the Charge relay system in catalysis. N-linked (GlcNAc...) asparagine glycans are attached at residues Asn577, Asn615, and Asn633.

This sequence belongs to the peptidase S8 family. Post-translationally, the C-terminal propeptide is autocleaved.

The protein localises to the secreted. This chain is Subtilisin-like protease SBT4.7, found in Arabidopsis thaliana (Mouse-ear cress).